A 289-amino-acid polypeptide reads, in one-letter code: Pre-mRNA-splicing factor cwf23 (289 aa).

Positions 9–74 constitute a J domain; sequence DYYELLGINE…QLRKAYDSER (66 aa). Positions 129–148 are enriched in basic and acidic residues; sequence ESANLRRQRENRLREEQEQS. 2 disordered regions span residues 129–161 and 269–289; these read ESAN…SKIS and KQKH…TMNA.

It belongs to the DnaJ family. As to quaternary structure, belongs to the 40S cdc5-associated complex (or cwf complex), a spliceosome sub-complex reminiscent of a late-stage spliceosome composed of the U2, U5 and U6 snRNAs and at least brr2, cdc5, cwf2/prp3, cwf3/syf1, cwf4/syf3, cwf5/ecm2, spp42/cwf6, cwf7/spf27, cwf8, cwf9, cwf10, cwf11, cwf12, prp45/cwf13, cwf14, cwf15, cwf16, cwf17, cwf18, cwf19, cwf20, cwf21, cwf22, cwf23, cwf24, cwf25, cwf26, cyp7/cwf27, cwf28, cwf29/ist3, lea1, msl1, prp5/cwf1, prp10, prp12/sap130, prp17, prp22, sap61, sap62, sap114, sap145, slu7, smb1, smd1, smd3, smf1, smg1 and syf2.

It is found in the cytoplasm. It localises to the nucleus. In terms of biological role, involved in pre-mRNA splicing. May be involved in endoplasmic reticulum-associated protein degradation (ERAD) and required for growth at low and high temperatures. This is Pre-mRNA-splicing factor cwf23 (cwf23) from Schizosaccharomyces pombe (strain 972 / ATCC 24843) (Fission yeast).